We begin with the raw amino-acid sequence, 218 residues long: Peptide methionine sulfoxide reductase MsrA (218 aa).

Residues 1–28 (MSFLDSYRKKTQMPSTDEALPGRAQPIP) are disordered. The active site involves Cys57.

Belongs to the MsrA Met sulfoxide reductase family.

The catalysed reaction is L-methionyl-[protein] + [thioredoxin]-disulfide + H2O = L-methionyl-(S)-S-oxide-[protein] + [thioredoxin]-dithiol. It catalyses the reaction [thioredoxin]-disulfide + L-methionine + H2O = L-methionine (S)-S-oxide + [thioredoxin]-dithiol. Has an important function as a repair enzyme for proteins that have been inactivated by oxidation. Catalyzes the reversible oxidation-reduction of methionine sulfoxide in proteins to methionine. The chain is Peptide methionine sulfoxide reductase MsrA from Brucella anthropi (strain ATCC 49188 / DSM 6882 / CCUG 24695 / JCM 21032 / LMG 3331 / NBRC 15819 / NCTC 12168 / Alc 37) (Ochrobactrum anthropi).